Consider the following 178-residue polypeptide: Adenine phosphoribosyltransferase (178 aa).

Belongs to the purine/pyrimidine phosphoribosyltransferase family. In terms of assembly, homodimer.

The protein resides in the cytoplasm. It catalyses the reaction AMP + diphosphate = 5-phospho-alpha-D-ribose 1-diphosphate + adenine. The protein operates within purine metabolism; AMP biosynthesis via salvage pathway; AMP from adenine: step 1/1. In terms of biological role, catalyzes a salvage reaction resulting in the formation of AMP, that is energically less costly than de novo synthesis. This Novosphingobium aromaticivorans (strain ATCC 700278 / DSM 12444 / CCUG 56034 / CIP 105152 / NBRC 16084 / F199) protein is Adenine phosphoribosyltransferase.